The following is a 1385-amino-acid chain: PsbD mRNA maturation factor Nac2, chloroplastic (1385 aa).

The transit peptide at 1–45 directs the protein to the chloroplast; the sequence is MGALPCPAHIEHHQGLSSFGTRRVLRQSVACGAHRSRRRSLWAGA. Low complexity predominate over residues 132 to 152; sequence GPHGAASATGAGSHSSSAGAP. 7 disordered regions span residues 132 to 157, 263 to 282, 304 to 360, 387 to 502, 546 to 568, 726 to 756, and 840 to 899; these read GPHGAASATGAGSHSSSAGAPTPTPR, AVAAAAGRQPHEHQQERSSA, TSSR…AAGP, RQQP…GHGQ, NGAGMSDPASASSTSTSSNSGTS, HADSSSSNGNGSGSSSSSGLPQVSEEEVAAA, and ARRA…APSA. The span at 271–281 shows a compositional bias: basic and acidic residues; it reads QPHEHQQERSS. A compositionally biased stretch (low complexity) spans 304–313; that stretch reads TSSRRGGRSS. Residues 403-412 are compositionally biased toward gly residues; sequence NGSGKSGSGG. Low complexity-rich tracts occupy residues 448–464, 554–568, 729–744, and 854–893; these read APAAKRSAAGKASRPAA, ASASSTSTSSNSGTS, SSSSNGNGSGSSSSSG, and ASTTASMDGDDGALSVADGSSSADAAIDPASGASPSAAAG. TPR repeat units follow at residues 851-884, 951-984, 985-1018, 1019-1052, 1053-1086, 1091-1124, 1125-1158, 1160-1193, and 1205-1238; these read RRGASTTASMDGDDGALSVADGSSSADAAIDPAS, GAVMHYWGSRELEAGNVRNARIVAAEALRKCPAD, VALYVLAASVELEASNLELAKGYCQRAYALDRTD, KQLFLIWPRVEAGLGDRDKARLLFERALDAHPLN, TKIINMYARFEAEEGSYREAAELYDRALQIDPLS, VHNRADWASMETDLGNTGLARQLLEEGLEAHPNS, AALLVVYSKLQRLEGRYQEALAAVRRAQAVAGAF, AAVMNERAQVLRALGERELAANLSRHVSAVKQLN, and AWRAFVEATRTPEQRTLVAAARAHRLQLGWAPAV. 2 disordered regions span residues 1237 to 1257 and 1333 to 1385; these read AVRGAKPGPPPGVVAGDGRRP and IQDP…ADDM. Over residues 1356–1365 the composition is skewed to acidic residues; the sequence is QDADYYEEPE. Residues 1374-1385 are compositionally biased toward basic and acidic residues; that stretch reads AVRRPMPDADDM.

In terms of assembly, part of 2 complexes of about 600 and less than 2000 kDa, both of which also contain non-polysomal RNA.

It is found in the plastid. It localises to the chloroplast stroma. Functionally, involved, directly or indirectly, in the processing of the chloroplast encoded psbD mRNA to its mature form, acting via the 5'-UTR of the psbD mRNA. The last 588 amino acids of the protein are sufficient to confer stability on the transcript in vivo. The polypeptide is PsbD mRNA maturation factor Nac2, chloroplastic (NAC2) (Chlamydomonas reinhardtii (Chlamydomonas smithii)).